The sequence spans 409 residues: tRNA-specific 2-thiouridylase MnmA (409 aa).

Residues 43–50 and L69 contribute to the ATP site; that span reads AMSGGVDS. C137 serves as the catalytic Nucleophile. C137 and C235 are disulfide-bonded. G161 serves as a coordination point for ATP. Residues 185–187 form an interaction with tRNA region; sequence KDQ. Catalysis depends on C235, which acts as the Cysteine persulfide intermediate.

It belongs to the MnmA/TRMU family.

It is found in the cytoplasm. It carries out the reaction S-sulfanyl-L-cysteinyl-[protein] + uridine(34) in tRNA + AH2 + ATP = 2-thiouridine(34) in tRNA + L-cysteinyl-[protein] + A + AMP + diphosphate + H(+). Functionally, catalyzes the 2-thiolation of uridine at the wobble position (U34) of tRNA, leading to the formation of s(2)U34. The protein is tRNA-specific 2-thiouridylase MnmA of Caulobacter sp. (strain K31).